A 269-amino-acid polypeptide reads, in one-letter code: Cytochrome c oxidase subunit 3 (269 aa).

7 helical membrane passes run 21-41 (PWPI…ALTM), 45-65 (IGHM…ATLW), 90-110 (GFLL…WAYF), 138-160 (PLLN…HGLV), 167-187 (ALSG…CQYI), 205-225 (FYAG…MLGI), and 247-267 (VLYC…FYWW).

Belongs to the cytochrome c oxidase subunit 3 family. Component of the cytochrome c oxidase (complex IV, CIV), a multisubunit enzyme composed of a catalytic core of 3 subunits and several supernumerary subunits. The complex exists as a monomer or a dimer and forms supercomplexes (SCs) in the inner mitochondrial membrane with ubiquinol-cytochrome c oxidoreductase (cytochrome b-c1 complex, complex III, CIII).

The protein localises to the mitochondrion inner membrane. It catalyses the reaction 4 Fe(II)-[cytochrome c] + O2 + 8 H(+)(in) = 4 Fe(III)-[cytochrome c] + 2 H2O + 4 H(+)(out). Component of the cytochrome c oxidase, the last enzyme in the mitochondrial electron transport chain which drives oxidative phosphorylation. The respiratory chain contains 3 multisubunit complexes succinate dehydrogenase (complex II, CII), ubiquinol-cytochrome c oxidoreductase (cytochrome b-c1 complex, complex III, CIII) and cytochrome c oxidase (complex IV, CIV), that cooperate to transfer electrons derived from NADH and succinate to molecular oxygen, creating an electrochemical gradient over the inner membrane that drives transmembrane transport and the ATP synthase. Cytochrome c oxidase is the component of the respiratory chain that catalyzes the reduction of oxygen to water. Electrons originating from reduced cytochrome c in the intermembrane space (IMS) are transferred via the dinuclear copper A center (CU(A)) of subunit 2 and heme A of subunit 1 to the active site in subunit 1, a binuclear center (BNC) formed by heme A3 and copper B (CU(B)). The BNC reduces molecular oxygen to 2 water molecules using 4 electrons from cytochrome c in the IMS and 4 protons from the mitochondrial matrix. This chain is Cytochrome c oxidase subunit 3 (COX3), found in Kluyveromyces lactis (strain ATCC 8585 / CBS 2359 / DSM 70799 / NBRC 1267 / NRRL Y-1140 / WM37) (Yeast).